The chain runs to 323 residues: Acetyl-coenzyme A carboxylase carboxyl transferase subunit alpha (323 aa).

The CoA carboxyltransferase C-terminal domain occupies 40–293; it reads LSEKSLQLTK…RKALSDSLKT (254 aa).

The protein belongs to the AccA family. Acetyl-CoA carboxylase is a heterohexamer composed of biotin carboxyl carrier protein (AccB), biotin carboxylase (AccC) and two subunits each of ACCase subunit alpha (AccA) and ACCase subunit beta (AccD).

It is found in the cytoplasm. The catalysed reaction is N(6)-carboxybiotinyl-L-lysyl-[protein] + acetyl-CoA = N(6)-biotinyl-L-lysyl-[protein] + malonyl-CoA. It participates in lipid metabolism; malonyl-CoA biosynthesis; malonyl-CoA from acetyl-CoA: step 1/1. Functionally, component of the acetyl coenzyme A carboxylase (ACC) complex. First, biotin carboxylase catalyzes the carboxylation of biotin on its carrier protein (BCCP) and then the CO(2) group is transferred by the carboxyltransferase to acetyl-CoA to form malonyl-CoA. This chain is Acetyl-coenzyme A carboxylase carboxyl transferase subunit alpha, found in Polynucleobacter asymbioticus (strain DSM 18221 / CIP 109841 / QLW-P1DMWA-1) (Polynucleobacter necessarius subsp. asymbioticus).